Reading from the N-terminus, the 427-residue chain is Caspase recruitment domain-containing protein 8 (427 aa).

The segment at 1–23 (MGIPTSSVSEEQESSEGQDSGDI) is disordered. Residues 51–186 (FLGPEGNVDV…FYAVLEKPSF (136 aa)) form a ZU5 region. In terms of domain architecture, FIIND spans 51–336 (FLGPEGNVDV…IQLGAASAPP (286 aa)). Positions 187–336 (SLMGILLRIA…IQLGAASAPP (150 aa)) are UPA. Positions 336–426 (PAFSGAAFVK…YLVSYLRQQS (91 aa)) constitute a CARD domain.

As to quaternary structure, interacts with DPP9; leading to inhibit activation of the inflammasome. DPP9 acts via formation of a ternary complex, composed of a DPP9 homodimer, one full-length CARD8 protein, and one cleaved C-terminus of CARD8 (Caspase recruitment domain-containing protein 8, C-terminus). Interacts with DPP8; leading to inhibit activation of the inflammasome, probably via formation of a ternary complex with DPP8. Interacts with NLRP3. Interacts with IKBKG/NEMO. Interacts with DRAL. Binds to caspase-1 (CASP1), CARD16/pseudo-ICE and CARD18/ICEBERG. Interacts with NLRP2 (via NACHT domain). In terms of assembly, interacts with the C-terminal part of CARD8 (Caspase recruitment domain-containing protein 8, C-terminus) in absence of pathogens and other damage-associated signals. Interacts with the N-terminal part of CARD8 (Caspase recruitment domain-containing protein 8, N-terminus) in absence of pathogens and other damage-associated signals. Homomultimer; forms the CARD8 inflammasome polymeric complex, a filament composed of homopolymers of this form in response to pathogens and other damage-associated signals. The CARD8 inflammasome polymeric complex directly recruits pro-caspase-1 (proCASP1) independently of PYCARD/ASC. Interacts (via CARD domain) with CASP1 (via CARD domain); leading to CASP1 activation. Post-translationally, undergoes autocatalytic processing within the FIIND domain to generate the N-terminal and C-terminal parts, which are associated non-covalently in absence of pathogens and other damage-associated signals. In terms of processing, ubiquitinated by the N-end rule pathway in response to pathogens and other damage-associated signals, leading to its degradation by the proteasome and subsequent release of the cleaved C-terminal part of the protein (Caspase recruitment domain-containing protein 8, C-terminus), which polymerizes and forms the CARD8 inflammasome.

The protein resides in the cytoplasm. Its subcellular location is the nucleus. The protein localises to the inflammasome. Its activity is regulated as follows. CARD8 inflammasome is inhibited by DPP8 and DPP9, which sequester the C-terminal fragment of CARD8 (Caspase recruitment domain-containing protein 8, C-terminus) in a ternary complex, thereby preventing CARD8 oligomerization and activation. CARD8 inflammasome is activated by Val-boroPro (Talabostat, PT-100), an inhibitor of dipeptidyl peptidases DPP8 and DPP9. Val-boroPro relieves inhibition of DPP8 and/or DPP9 by inducing the proteasome-mediated destruction of the N-terminal part of CARD8, releasing its C-terminal part from autoinhibition. In terms of biological role, inflammasome sensor, which mediates inflammasome activation in response to various pathogen-associated signals, leading to subsequent pyroptosis of CD4(+) T-cells and macrophages. Inflammasomes are supramolecular complexes that assemble in the cytosol in response to pathogens and other damage-associated signals and play critical roles in innate immunity and inflammation. Acts as a recognition receptor (PRR): recognizes specific pathogens and other damage-associated signals, such as Val-boroPro inhibitor, and mediates CARD8 inflammasome activation. In response to pathogen-associated signals, the N-terminal part of CARD8 is degraded by the proteasome, releasing the cleaved C-terminal part of the protein (Caspase recruitment domain-containing protein 8, C-terminus), which polymerizes to initiate the formation of the inflammasome complex: the CARD8 inflammasome directly recruits pro-caspase-1 (proCASP1) independently of PYCARD/ASC and promotes caspase-1 (CASP1) activation, which subsequently cleaves and activates inflammatory cytokines IL1B and IL18 and gasdermin-D (GSDMD), leading to pyroptosis. Also acts as a negative regulator of the NLRP3 inflammasome. May also act as an inhibitor of NF-kappa-B activation. Functionally, constitutes the precursor of the CARD8 inflammasome, which mediates autoproteolytic processing within the FIIND domain to generate the N-terminal and C-terminal parts, which are associated non-covalently in absence of pathogens and other damage-associated signals. Its function is as follows. Regulatory part that prevents formation of the CARD8 inflammasome: in absence of pathogens and other damage-associated signals, interacts with the C-terminal part of CARD8 (Caspase recruitment domain-containing protein 8, C-terminus), preventing activation of the CARD8 inflammasome. In response to pathogen-associated signals, this part is ubiquitinated by the N-end rule pathway and degraded by the proteasome, releasing the cleaved C-terminal part of the protein, which polymerizes and forms the CARD8 inflammasome. Constitutes the active part of the CARD8 inflammasome. In absence of pathogens and other damage-associated signals, interacts with the N-terminal part of CARD8 (Caspase recruitment domain-containing protein 8, N-terminus), preventing activation of the CARD8 inflammasome. In response to pathogen-associated signals, the N-terminal part of CARD8 is degraded by the proteasome, releasing this form, which polymerizes to form the CARD8 inflammasome complex: the CARD8 inflammasome complex then directly recruits pro-caspase-1 (proCASP1) and promotes caspase-1 (CASP1) activation, leading to gasdermin-D (GSDMD) cleavage and subsequent pyroptosis. The protein is Caspase recruitment domain-containing protein 8 of Pongo abelii (Sumatran orangutan).